Consider the following 79-residue polypeptide: Sulfur carrier protein TusA (79 aa).

C17 serves as the catalytic Cysteine persulfide intermediate.

This sequence belongs to the sulfur carrier protein TusA family.

It is found in the cytoplasm. In terms of biological role, sulfur carrier protein which probably makes part of a sulfur-relay system. The protein is Sulfur carrier protein TusA of Mannheimia succiniciproducens (strain KCTC 0769BP / MBEL55E).